The following is a 464-amino-acid chain: MLATDSDPIVAIATAAGRGGIGVVRVSFGRGGEAAALPLIDALCGQRLAPRHASYVPFVDEHGAPLDRGIALYFPAPHSYTGEHVLELQGHGGPIVMQLLLQRCLDAGRGFGLRLAQPGEFTRRAFLNDKLDLAQAEAVADLIEASTEAAARSAGRSLDGAFSRQIHALVEDVITLRMLVEATLDFPEEEIDFLEAADARGKLAKIREQLAHVLGDARQGALLREGLSVVLAGQPNVGKSSLLNALAGAELAIVTPIAGTTRDKVAQTIQVEGIPLHIIDTAGLRETEDEVERIGIARTWSEIERADVVLHLLDSRTGMTADDEVIAARFPGGVPVVRVLNKTDLTGVPACVEHPAAAGDLTEVHLSAKRGDGIDMLRAELLRIAGWQAGAEGVYLARERHLIALRAAQEHLAQAADHAEQRAQSLDLFAEELRLAQEQLNAITGEFTSDDLLGVIFSRFCIGK.

The (6S)-5-formyl-5,6,7,8-tetrahydrofolate site is built by Arg25, Glu87, and Lys130. The 161-residue stretch at 226–386 (GLSVVLAGQP…LRAELLRIAG (161 aa)) folds into the TrmE-type G domain. Asn236 is a K(+) binding site. GTP is bound by residues 236-241 (NVGKSS), 255-261 (TPIAGTT), and 280-283 (DTAG). Ser240 contributes to the Mg(2+) binding site. K(+)-binding residues include Thr255, Ile257, and Thr260. Thr261 lines the Mg(2+) pocket. Lys464 serves as a coordination point for (6S)-5-formyl-5,6,7,8-tetrahydrofolate.

It belongs to the TRAFAC class TrmE-Era-EngA-EngB-Septin-like GTPase superfamily. TrmE GTPase family. As to quaternary structure, homodimer. Heterotetramer of two MnmE and two MnmG subunits. Requires K(+) as cofactor.

It localises to the cytoplasm. Exhibits a very high intrinsic GTPase hydrolysis rate. Involved in the addition of a carboxymethylaminomethyl (cmnm) group at the wobble position (U34) of certain tRNAs, forming tRNA-cmnm(5)s(2)U34. The protein is tRNA modification GTPase MnmE of Burkholderia ambifaria (strain ATCC BAA-244 / DSM 16087 / CCUG 44356 / LMG 19182 / AMMD) (Burkholderia cepacia (strain AMMD)).